A 431-amino-acid chain; its full sequence is tRNA(Ile)-lysidine synthase (431 aa).

Residue 20–25 (SGGLDS) coordinates ATP.

This sequence belongs to the tRNA(Ile)-lysidine synthase family.

It is found in the cytoplasm. It catalyses the reaction cytidine(34) in tRNA(Ile2) + L-lysine + ATP = lysidine(34) in tRNA(Ile2) + AMP + diphosphate + H(+). In terms of biological role, ligates lysine onto the cytidine present at position 34 of the AUA codon-specific tRNA(Ile) that contains the anticodon CAU, in an ATP-dependent manner. Cytidine is converted to lysidine, thus changing the amino acid specificity of the tRNA from methionine to isoleucine. The polypeptide is tRNA(Ile)-lysidine synthase (Escherichia coli O157:H7).